A 506-amino-acid polypeptide reads, in one-letter code: ATP synthase subunit alpha (506 aa).

Position 171–178 (171–178 (GDRKTGKT)) interacts with ATP.

It belongs to the ATPase alpha/beta chains family. In terms of assembly, F-type ATPases have 2 components, CF(1) - the catalytic core - and CF(0) - the membrane proton channel. CF(1) has five subunits: alpha(3), beta(3), gamma(1), delta(1), epsilon(1). CF(0) has three main subunits: a(1), b(2) and c(9-12). The alpha and beta chains form an alternating ring which encloses part of the gamma chain. CF(1) is attached to CF(0) by a central stalk formed by the gamma and epsilon chains, while a peripheral stalk is formed by the delta and b chains.

It is found in the cell inner membrane. It catalyses the reaction ATP + H2O + 4 H(+)(in) = ADP + phosphate + 5 H(+)(out). Its function is as follows. Produces ATP from ADP in the presence of a proton gradient across the membrane. The alpha chain is a regulatory subunit. The sequence is that of ATP synthase subunit alpha from Anaplasma phagocytophilum (strain HZ).